We begin with the raw amino-acid sequence, 114 residues long: Iron-sulfur cluster insertion protein ErpA (114 aa).

Residues cysteine 42, cysteine 106, and cysteine 108 each coordinate iron-sulfur cluster.

Belongs to the HesB/IscA family. Homodimer. Requires iron-sulfur cluster as cofactor.

Required for insertion of 4Fe-4S clusters for at least IspG. In Proteus mirabilis (strain HI4320), this protein is Iron-sulfur cluster insertion protein ErpA.